The chain runs to 511 residues: Maturase K (511 aa).

This sequence belongs to the intron maturase 2 family. MatK subfamily.

Its subcellular location is the plastid. The protein resides in the chloroplast. In terms of biological role, usually encoded in the trnK tRNA gene intron. Probably assists in splicing its own and other chloroplast group II introns. This chain is Maturase K, found in Paulownia tomentosa (Princess tree).